A 266-amino-acid chain; its full sequence is Undecaprenyl-diphosphatase (266 aa).

Transmembrane regions (helical) follow at residues 4–24 (ILSA…PISS), 39–59 (LSII…IIYY), 86–106 (LKLI…GTFI), 112–132 (MFTL…ILML), 145–165 (ILLA…PGIS), 182–202 (KSAF…AILL), 210–230 (IFMV…FVVG), and 246–266 (LYYF…FVRI).

It belongs to the UppP family.

It is found in the cell inner membrane. The enzyme catalyses di-trans,octa-cis-undecaprenyl diphosphate + H2O = di-trans,octa-cis-undecaprenyl phosphate + phosphate + H(+). Catalyzes the dephosphorylation of undecaprenyl diphosphate (UPP). Confers resistance to bacitracin. In Borreliella burgdorferi (strain ATCC 35210 / DSM 4680 / CIP 102532 / B31) (Borrelia burgdorferi), this protein is Undecaprenyl-diphosphatase.